A 150-amino-acid chain; its full sequence is Large ribosomal subunit protein eL19 (150 aa).

The segment at Ile55 to Met89 is disordered.

It belongs to the eukaryotic ribosomal protein eL19 family. Part of the 50S ribosomal subunit.

Functionally, binds to the 23S rRNA. The sequence is that of Large ribosomal subunit protein eL19 from Pyrococcus furiosus (strain ATCC 43587 / DSM 3638 / JCM 8422 / Vc1).